The chain runs to 500 residues: L-arabinose isomerase (500 aa).

Positions 306, 333, 350, and 450 each coordinate Mn(2+).

The protein belongs to the arabinose isomerase family. As to quaternary structure, homohexamer. Mn(2+) is required as a cofactor.

It catalyses the reaction beta-L-arabinopyranose = L-ribulose. It participates in carbohydrate degradation; L-arabinose degradation via L-ribulose; D-xylulose 5-phosphate from L-arabinose (bacterial route): step 1/3. Catalyzes the conversion of L-arabinose to L-ribulose. The sequence is that of L-arabinose isomerase from Salmonella paratyphi A (strain ATCC 9150 / SARB42).